Reading from the N-terminus, the 389-residue chain is Multidrug resistance protein 1 (389 aa).

The next 11 membrane-spanning stretches (helical) occupy residues 6-26 (ITLT…GLVI), 42-62 (AVGY…PIAG), 71-91 (KIMI…FGIG), 102-122 (MLGG…IADI), 134-154 (YMSA…GFLA), 160-180 (LPFF…ILTL), 202-222 (IFAP…FGLA), 243-263 (IAIM…VLFD), 286-306 (VFLL…VTVF), 336-356 (SMFT…LFDI), and 358-378 (VNYP…LTIA).

This sequence belongs to the major facilitator superfamily. TCR/Tet family.

The protein localises to the cell membrane. Its function is as follows. Energy-dependent efflux pump responsible for decreased drug accumulation in multi-drug-resistant cells. Probably uses a transmembrane proton gradient as the energy source. Causes the efflux of a variety of toxic substances, including such structurally diverse compounds as ethidium bromide, rhodamine and acridine dyes, tetraphenylphosphonium, puromycin, chloramphenicol, doxorubicin, and fluoroquinolone antibiotics. The polypeptide is Multidrug resistance protein 1 (bmr) (Bacillus subtilis (strain 168)).